We begin with the raw amino-acid sequence, 542 residues long: Chaperonin GroEL (542 aa).

ATP is bound by residues 29-32 (TLGP), 86-90 (DGTTT), Gly-413, 476-478 (NAA), and Asp-492.

The protein belongs to the chaperonin (HSP60) family. As to quaternary structure, forms a cylinder of 14 subunits composed of two heptameric rings stacked back-to-back. Interacts with the co-chaperonin GroES.

It is found in the cytoplasm. It carries out the reaction ATP + H2O + a folded polypeptide = ADP + phosphate + an unfolded polypeptide.. Together with its co-chaperonin GroES, plays an essential role in assisting protein folding. The GroEL-GroES system forms a nano-cage that allows encapsulation of the non-native substrate proteins and provides a physical environment optimized to promote and accelerate protein folding. This is Chaperonin GroEL from Lactococcus lactis subsp. lactis (strain IL1403) (Streptococcus lactis).